The primary structure comprises 310 residues: ADP-L-glycero-D-manno-heptose-6-epimerase (310 aa).

NADP(+) is bound by residues 10-11 (FI), 31-32 (DN), lysine 38, lysine 53, 75-79 (EGACS), and asparagine 92. Tyrosine 140 functions as the Proton acceptor in the catalytic mechanism. Position 144 (lysine 144) interacts with NADP(+). Asparagine 169 contacts substrate. Valine 170 and lysine 178 together coordinate NADP(+). The active-site Proton acceptor is the lysine 178. Residues serine 180, histidine 187, 201–204 (FEGS), arginine 209, and tyrosine 272 contribute to the substrate site.

This sequence belongs to the NAD(P)-dependent epimerase/dehydratase family. HldD subfamily. Homopentamer. NADP(+) is required as a cofactor.

It carries out the reaction ADP-D-glycero-beta-D-manno-heptose = ADP-L-glycero-beta-D-manno-heptose. It functions in the pathway nucleotide-sugar biosynthesis; ADP-L-glycero-beta-D-manno-heptose biosynthesis; ADP-L-glycero-beta-D-manno-heptose from D-glycero-beta-D-manno-heptose 7-phosphate: step 4/4. Its function is as follows. Catalyzes the interconversion between ADP-D-glycero-beta-D-manno-heptose and ADP-L-glycero-beta-D-manno-heptose via an epimerization at carbon 6 of the heptose. This is ADP-L-glycero-D-manno-heptose-6-epimerase from Salmonella heidelberg (strain SL476).